Reading from the N-terminus, the 1185-residue chain is Calmodulin-binding transcription activator homolog 1 (1185 aa).

Positions 72–200 (AVELFPCFKD…YLNVKTNNKI (129 aa)) form a DNA-binding region, CG-1. Disordered regions lie at residues 252–277 (GVNLPTSPLPQEPSSSTSRELERRNS) and 390–411 (KIRSGSQESPMGPPSSSSVTST). Residues 393–411 (SGSQESPMGPPSSSSVTST) are compositionally biased toward low complexity. The region spanning 418–498 (EMTPSSSSLK…ISTASEFTYE (81 aa)) is the IPT/TIG domain. One copy of the ANK repeat lies at 616 to 646 (DGSTPLHTACKNSASRIARLIISIDSSAIDV). The region spanning 957 to 984 (EAAMVIQRAYRVYRARSTTRRQEDIERR) is the IQ domain. A disordered region spans residues 1121–1185 (CPQTSGDQRN…KPPYGCGTLA (65 aa)). The segment covering 1128-1147 (QRNKRDSDGERKRDAHHDAP) has biased composition (basic and acidic residues).

This sequence belongs to the CAMTA family. In terms of assembly, may interact with calmodulin. Expressed broadly in the nervous system.

The protein resides in the nucleus. Functionally, transcription factor. Positively modulates neuronal levels of the ubiquitous Ca2+ sensor calmodulin/cmd-1, probably by direct binding to the cmd-1 promoter, thereby regulating Ca2+ signaling, physiology, and behavior. The protein is Calmodulin-binding transcription activator homolog 1 of Caenorhabditis elegans.